The primary structure comprises 155 residues: Ribonuclease H (155 aa).

The RNase H type-1 domain maps to 4-146 (NIDVVEIYTD…CDRLATEQIK (143 aa)). Asp13, Glu51, Asp73, and Asp138 together coordinate Mg(2+).

It belongs to the RNase H family. Monomer. Mg(2+) is required as a cofactor.

It is found in the cytoplasm. It catalyses the reaction Endonucleolytic cleavage to 5'-phosphomonoester.. Functionally, endonuclease that specifically degrades the RNA of RNA-DNA hybrids. In Thermoanaerobacter pseudethanolicus (strain ATCC 33223 / 39E) (Clostridium thermohydrosulfuricum), this protein is Ribonuclease H.